The following is a 153-amino-acid chain: UPF0768 protein PB2B2.18 (153 aa).

Belongs to the UPF0768 family.

The polypeptide is UPF0768 protein PB2B2.18 (Schizosaccharomyces pombe (strain 972 / ATCC 24843) (Fission yeast)).